Here is a 193-residue protein sequence, read N- to C-terminus: Probable nicotinate-nucleotide adenylyltransferase (193 aa).

Belongs to the NadD family.

The enzyme catalyses nicotinate beta-D-ribonucleotide + ATP + H(+) = deamido-NAD(+) + diphosphate. It participates in cofactor biosynthesis; NAD(+) biosynthesis; deamido-NAD(+) from nicotinate D-ribonucleotide: step 1/1. In terms of biological role, catalyzes the reversible adenylation of nicotinate mononucleotide (NaMN) to nicotinic acid adenine dinucleotide (NaAD). This Chlorobium phaeovibrioides (strain DSM 265 / 1930) (Prosthecochloris vibrioformis (strain DSM 265)) protein is Probable nicotinate-nucleotide adenylyltransferase.